Here is a 114-residue protein sequence, read N- to C-terminus: Histone H3-3 (114 aa).

Residues Asn1–Lys17 show a composition bias toward basic residues. Residues Asn1 to His32 are disordered. A compositionally biased stretch (low complexity) spans Lys18–Val28.

The protein belongs to the histone H3 family. The nucleosome is a histone octamer containing two molecules each of H2A, H2B, H3 and H4 assembled in one H3-H4 heterotetramer and two H2A-H2B heterodimers. The octamer wraps approximately 147 bp of DNA.

It is found in the nucleus. Its subcellular location is the chromosome. Functionally, core component of nucleosome. Nucleosomes wrap and compact DNA into chromatin, limiting DNA accessibility to the cellular machineries which require DNA as a template. Histones thereby play a central role in transcription regulation, DNA repair, DNA replication and chromosomal stability. DNA accessibility is regulated via a complex set of post-translational modifications of histones, also called histone code, and nucleosome remodeling. The protein is Histone H3-3 (H3-3) of Stylonychia lemnae (Ciliate).